The sequence spans 482 residues: UDP-N-acetylmuramate--L-alanine ligase (482 aa).

123–129 provides a ligand contact to ATP; the sequence is GTHGKTT.

This sequence belongs to the MurCDEF family.

Its subcellular location is the cytoplasm. It catalyses the reaction UDP-N-acetyl-alpha-D-muramate + L-alanine + ATP = UDP-N-acetyl-alpha-D-muramoyl-L-alanine + ADP + phosphate + H(+). Its pathway is cell wall biogenesis; peptidoglycan biosynthesis. Functionally, cell wall formation. This Pseudomonas putida (strain GB-1) protein is UDP-N-acetylmuramate--L-alanine ligase.